A 420-amino-acid polypeptide reads, in one-letter code: Protein maelstrom homolog (420 aa).

The HMG box DNA-binding region spans 4 to 73; it reads RRASRNAYYF…AQGKDSGPSE (70 aa). Disordered regions lie at residues 62-94, 341-372, and 392-420; these read RAAQ…KQNV, GFSH…GQNS, and NIHK…SSLS. 2 stretches are compositionally biased toward polar residues: residues 344–358 and 392–407; these read HFSS…NTPT and NIHK…SPYT.

Belongs to the maelstrom family. Interacts with SMARCB1, SIN3B and DDX4. Interacts with piRNA-associated proteins TDRD1, PIWIL1 and PIWIL2. Interacts with TEX19.

It localises to the cytoplasm. The protein resides in the nucleus. Plays a central role during spermatogenesis by repressing transposable elements and preventing their mobilization, which is essential for the germline integrity. Acts via the piRNA metabolic process, which mediates the repression of transposable elements during meiosis by forming complexes composed of piRNAs and Piwi proteins and governs the methylation and subsequent repression of transposons. Its association with piP-bodies suggests a participation in the secondary piRNAs metabolic process. Required for the localization of germ-cell factors to the meiotic nuage. The sequence is that of Protein maelstrom homolog (MAEL) from Bos taurus (Bovine).